The chain runs to 443 residues: Tol-Pal system protein TolB (443 aa).

Positions 1–33 (MKIGIINTKIRTVFSAFACMIAASLVCTMPARA) are cleaved as a signal peptide.

The protein belongs to the TolB family. In terms of assembly, the Tol-Pal system is composed of five core proteins: the inner membrane proteins TolA, TolQ and TolR, the periplasmic protein TolB and the outer membrane protein Pal. They form a network linking the inner and outer membranes and the peptidoglycan layer.

It is found in the periplasm. Its function is as follows. Part of the Tol-Pal system, which plays a role in outer membrane invagination during cell division and is important for maintaining outer membrane integrity. This is Tol-Pal system protein TolB from Brucella suis biovar 1 (strain 1330).